The primary structure comprises 251 residues: 3-deoxy-manno-octulosonate cytidylyltransferase (251 aa).

It belongs to the KdsB family.

The protein resides in the cytoplasm. It carries out the reaction 3-deoxy-alpha-D-manno-oct-2-ulosonate + CTP = CMP-3-deoxy-beta-D-manno-octulosonate + diphosphate. Its pathway is nucleotide-sugar biosynthesis; CMP-3-deoxy-D-manno-octulosonate biosynthesis; CMP-3-deoxy-D-manno-octulosonate from 3-deoxy-D-manno-octulosonate and CTP: step 1/1. It participates in bacterial outer membrane biogenesis; lipopolysaccharide biosynthesis. Its function is as follows. Activates KDO (a required 8-carbon sugar) for incorporation into bacterial lipopolysaccharide in Gram-negative bacteria. In Brucella canis (strain ATCC 23365 / NCTC 10854 / RM-666), this protein is 3-deoxy-manno-octulosonate cytidylyltransferase.